We begin with the raw amino-acid sequence, 255 residues long: Putative F-box protein L126 (255 aa).

Residues Met-1 to Lys-46 enclose the F-box domain.

The polypeptide is Putative F-box protein L126 (Acanthamoeba polyphaga (Amoeba)).